The chain runs to 828 residues: Glycerol-3-phosphate acyltransferase 1, mitochondrial (828 aa).

Residues 1–87 (MEESSVTIGT…FFNPSIPSLG (87 aa)) are Cytoplasmic-facing. Residues 80–120 (NPSIPSLGLRNVIYINETHTRHRGWLARRLSYILFVQERDV) form an important for mitochondrial localization region. Residues 88-118 (LRNVIYINETHTRHRGWLARRLSYILFVQER) lie within the membrane without spanning it. Topologically, residues 119–828 (DVHKGMFATS…LEYILSFVVL (710 aa)) are cytoplasmic. An HXXXXD motif motif is present at residues 230-235 (HRSHID). Residues Arg278, Arg279, Lys288, Arg293, and Arg328 each coordinate CoA. At Ser380 the chain carries Phosphoserine. Arg462 lines the CoA pocket. Residues Ser688 and Ser695 each carry the phosphoserine modification. Residues Lys780 and Lys784 each carry the N6-acetyllysine modification.

Belongs to the GPAT/DAPAT family.

Its subcellular location is the mitochondrion outer membrane. It carries out the reaction sn-glycerol 3-phosphate + an acyl-CoA = a 1-acyl-sn-glycero-3-phosphate + CoA. The enzyme catalyses sn-glycerol 3-phosphate + hexadecanoyl-CoA = 1-hexadecanoyl-sn-glycero-3-phosphate + CoA. It catalyses the reaction (9Z,12Z)-octadecadienoyl-CoA + sn-glycerol 3-phosphate = 1-(9Z,12Z)-octadecadienoyl-sn-glycero-3-phosphate + CoA. The catalysed reaction is sn-glycerol 3-phosphate + (9Z)-octadecenoyl-CoA = 1-(9Z-octadecenoyl)-sn-glycero-3-phosphate + CoA. It carries out the reaction sn-glycerol 3-phosphate + octadecanoyl-CoA = 1-octadecanoyl-sn-glycero-3-phosphate + CoA. The enzyme catalyses dodecanoyl-CoA + sn-glycerol 3-phosphate = 1-dodecanoyl-sn-glycerol 3-phosphate + CoA. It catalyses the reaction 1-acyl-sn-glycero-3-phospho-(1'-sn-glycerol) + an acyl-CoA = a 1,2-diacyl-sn-glycero-3-phospho-(1'-sn-glycerol) + CoA. It functions in the pathway phospholipid metabolism; CDP-diacylglycerol biosynthesis; CDP-diacylglycerol from sn-glycerol 3-phosphate: step 1/3. Its function is as follows. Mitochondrial membrane protein that catalyzes the essential first step of biosynthesis of glycerolipids such as triglycerides, phosphatidic acids and lysophosphatidic acids. Esterifies acyl-group from acyl-coenzyme A (acyl-CoA) to the sn-1 position of glycerol-3-phosphate, to produce lysophosphatidic acid. Has a narrow hydrophobic binding cleft that selects for a linear acyl chain. Catalytic activity is higher for substrates with a 16-carbon acyl chain. In Rattus norvegicus (Rat), this protein is Glycerol-3-phosphate acyltransferase 1, mitochondrial.